We begin with the raw amino-acid sequence, 1036 residues long: Isoleucine--tRNA ligase (1036 aa).

Residues 46-56 (PFATGLPHYGH) carry the 'HIGH' region motif. The short motif at 589 to 593 (KMSKR) is the 'KMSKS' region element. Lys-592 lines the ATP pocket.

This sequence belongs to the class-I aminoacyl-tRNA synthetase family. IleS type 2 subfamily. As to quaternary structure, monomer. Zn(2+) is required as a cofactor.

The protein localises to the cytoplasm. The catalysed reaction is tRNA(Ile) + L-isoleucine + ATP = L-isoleucyl-tRNA(Ile) + AMP + diphosphate. Catalyzes the attachment of isoleucine to tRNA(Ile). As IleRS can inadvertently accommodate and process structurally similar amino acids such as valine, to avoid such errors it has two additional distinct tRNA(Ile)-dependent editing activities. One activity is designated as 'pretransfer' editing and involves the hydrolysis of activated Val-AMP. The other activity is designated 'posttransfer' editing and involves deacylation of mischarged Val-tRNA(Ile). The protein is Isoleucine--tRNA ligase of Chlamydia trachomatis serovar L2 (strain ATCC VR-902B / DSM 19102 / 434/Bu).